Here is a 39-residue protein sequence, read N- to C-terminus: Omega-theraphotoxin-Asp1a (39 aa).

3 cysteine pairs are disulfide-bonded: Cys-4–Cys-25, Cys-8–Cys-31, and Cys-17–Cys-36.

Expressed by the venom gland.

The protein resides in the secreted. Toxin that inhibits voltage-gated calcium channels in rat cerebellar granule cells (IC(50)&lt;200 nM). Is lethal to cockroaches. This Aphonopelma sp. (American tarantula) protein is Omega-theraphotoxin-Asp1a.